The following is a 126-amino-acid chain: Methylglyoxal synthase (126 aa).

One can recognise an MGS-like domain in the interval 1–126 (MAERQKIALI…ADRLLPVITE (126 aa)). Residues histidine 12, lysine 16, 38–41 (TGTT), and 59–60 (SG) contribute to the substrate site. Aspartate 65 (proton donor/acceptor) is an active-site residue. Substrate is bound at residue histidine 92.

The protein belongs to the methylglyoxal synthase family.

The enzyme catalyses dihydroxyacetone phosphate = methylglyoxal + phosphate. In terms of biological role, catalyzes the formation of methylglyoxal from dihydroxyacetone phosphate. The protein is Methylglyoxal synthase of Allorhizobium ampelinum (strain ATCC BAA-846 / DSM 112012 / S4) (Agrobacterium vitis (strain S4)).